Reading from the N-terminus, the 640-residue chain is PAN2-PAN3 deadenylation complex subunit PAN3 (640 aa).

The C3H1-type zinc finger occupies 17 to 46; sequence ENKDILCRNVLIYGHCRYEDQGCTYNHDQN. Composition is skewed to polar residues over residues 43 to 53 and 63 to 87; these read HDQNKNSSQPE and DSPSFTPSGQSTVLPKKTTLSSQAA. Positions 43 to 101 are disordered; the sequence is HDQNKNSSQPEAPSKKMFNVDSPSFTPSGQSTVLPKKTTLSSQAASAAPFTPRGGGTPT. A pseudokinase domain region spans residues 237-498; it reads QVIPNSGLPQ…TIEHFMTGIA (262 aa). Residues Asn263, Arg288, 338-345, and 397-398 contribute to the ATP site; these read DFHPLSKT and SK. Residues 499 to 537 adopt a coiled-coil conformation; the sequence is SQMTTFFDLALQDNDEKLFHLAREVENGRIARSLMKLLT. The interval 538–640 is knob domain; it reads ILERGDYDGV…SKTGAPGANT (103 aa).

The protein belongs to the protein kinase superfamily. PAN3 family. In terms of assembly, homodimer. Forms a heterotrimer with a catalytic subunit PAN2 to form the poly(A)-nuclease (PAN) deadenylation complex. Interacts (via PAM-2 motif) with poly(A)-binding protein PAB1 (via PABC domain), conferring substrate specificity of the enzyme complex.

It is found in the cytoplasm. In terms of biological role, regulatory subunit of the poly(A)-nuclease (PAN) deadenylation complex, one of two cytoplasmic mRNA deadenylases involved in mRNA turnover. PAN specifically shortens poly(A) tails of RNA and the activity is stimulated by poly(A)-binding protein PAB1. PAN deadenylation is followed by rapid degradation of the shortened mRNA tails by the CCR4-NOT complex. Deadenylated mRNAs are then degraded by two alternative mechanisms, namely exosome-mediated 3'-5' exonucleolytic degradation, or deadenylation-dependent mRNA decaping and subsequent 5'-3' exonucleolytic degradation by XRN1. May also be involved in post-transcriptional maturation of mRNA poly(A) tails. PAN3 acts as a positive regulator for PAN activity, recruiting the catalytic subunit PAN2 to mRNA via its interaction with RNA and with PAB1. In Chaetomium thermophilum (strain DSM 1495 / CBS 144.50 / IMI 039719) (Thermochaetoides thermophila), this protein is PAN2-PAN3 deadenylation complex subunit PAN3.